The primary structure comprises 291 residues: uncharacterized protein (291 aa).

Helical transmembrane passes span 13-33, 40-60, 81-101, 128-148, 158-178, and 220-240; these read FDLF…MEMG, LGTV…LGFL, GFLN…LICI, FGLF…RLLL, VILG…YLEY, and GNVW…ILLA. A glycan (N-linked (GlcNAc...) asparagine) is linked at Asn-249. Positions 269–291 are disordered; sequence MASEDPPKDPLPRQEGGGGDTIA.

It localises to the membrane. This is an uncharacterized protein from Encephalitozoon cuniculi (strain GB-M1) (Microsporidian parasite).